The primary structure comprises 125 residues: Immunoglobulin heavy variable 4-39 (125 aa).

An N-terminal signal peptide occupies residues 1–26; the sequence is MDLMCKKMKHLWFFLLLVAAPRWVLS. Positions 27–51 are framework-1; the sequence is QLQLQESGPGLVKPSETLSLTCTVS. The Ig-like domain maps to 27–125; the sequence is QLQLQESGPG…ADTAVYYCAR (99 aa). Cys-48 and Cys-123 are joined by a disulfide. The tract at residues 52 to 61 is complementarity-determining-1; the sequence is GGSISSSSYY. A framework-2 region spans residues 62-78; it reads WGWIRQPPGKGLEWIGS. A complementarity-determining-2 region spans residues 79-85; that stretch reads IYYSGST. Residues 86 to 123 form a framework-3 region; it reads YYNPSLKSRVTISVDTSKNQFSLKLSSVTAADTAVYYC. Positions 124–125 are complementarity-determining-3; the sequence is AR.

In terms of assembly, immunoglobulins are composed of two identical heavy chains and two identical light chains; disulfide-linked.

It is found in the secreted. The protein localises to the cell membrane. Its function is as follows. V region of the variable domain of immunoglobulin heavy chains that participates in the antigen recognition. Immunoglobulins, also known as antibodies, are membrane-bound or secreted glycoproteins produced by B lymphocytes. In the recognition phase of humoral immunity, the membrane-bound immunoglobulins serve as receptors which, upon binding of a specific antigen, trigger the clonal expansion and differentiation of B lymphocytes into immunoglobulins-secreting plasma cells. Secreted immunoglobulins mediate the effector phase of humoral immunity, which results in the elimination of bound antigens. The antigen binding site is formed by the variable domain of one heavy chain, together with that of its associated light chain. Thus, each immunoglobulin has two antigen binding sites with remarkable affinity for a particular antigen. The variable domains are assembled by a process called V-(D)-J rearrangement and can then be subjected to somatic hypermutations which, after exposure to antigen and selection, allow affinity maturation for a particular antigen. The polypeptide is Immunoglobulin heavy variable 4-39 (Homo sapiens (Human)).